Consider the following 981-residue polypeptide: Serine/threonine-protein kinase D1044.8 (981 aa).

The Protein kinase domain occupies 453–725 (YELLDQLGAG…MCGVRLLEYL (273 aa)). Residues 459–467 (LGAGAFGCV) and Lys-488 contribute to the ATP site. Asp-591 acts as the Proton acceptor in catalysis. Polar residues predominate over residues 735–746 (TSDMTASQSSYN). Disordered stretches follow at residues 735–802 (TSDM…PSSI) and 823–847 (IPSRRRVQTCSTEHPARSSSSTELK). Low complexity predominate over residues 752–762 (SPSSLNSSTSS). Polar residues predominate over residues 830 to 847 (QTCSTEHPARSSSSTELK).

Belongs to the protein kinase superfamily. NEK Ser/Thr protein kinase family. NIMA subfamily. Mg(2+) is required as a cofactor.

It catalyses the reaction L-seryl-[protein] + ATP = O-phospho-L-seryl-[protein] + ADP + H(+). The catalysed reaction is L-threonyl-[protein] + ATP = O-phospho-L-threonyl-[protein] + ADP + H(+). The polypeptide is Serine/threonine-protein kinase D1044.8 (nekl-4) (Caenorhabditis elegans).